The chain runs to 145 residues: Cell division protein SepF (145 aa).

This sequence belongs to the SepF family. Homodimer. Interacts with FtsZ.

The protein localises to the cytoplasm. In terms of biological role, cell division protein that is part of the divisome complex and is recruited early to the Z-ring. Probably stimulates Z-ring formation, perhaps through the cross-linking of FtsZ protofilaments. Its function overlaps with FtsA. The chain is Cell division protein SepF from Lactobacillus acidophilus (strain ATCC 700396 / NCK56 / N2 / NCFM).